Reading from the N-terminus, the 339-residue chain is tRNA (guanine-N(7)-)-methyltransferase (339 aa).

Positions 1–20 (MTPPPAKRQKRNEYRKANTA) are disordered. Residues Gly94 and 117–118 (EI) contribute to the S-adenosyl-L-methionine site. The segment at 141–186 (RSSAIPSESSPAAQQPQQHHQQQLQATETAADAASPSSPDATGETL) is disordered. The span at 142 to 181 (SSAIPSESSPAAQQPQQHHQQQLQATETAADAASPSSPDA) shows a compositional bias: low complexity. S-adenosyl-L-methionine contacts are provided by residues 202 to 203 (NT) and Cys222. Asp225 is an active-site residue. 311 to 313 (TEE) contacts S-adenosyl-L-methionine.

This sequence belongs to the class I-like SAM-binding methyltransferase superfamily. TrmB family. As to quaternary structure, forms a complex with trm82.

The protein resides in the nucleus. The catalysed reaction is guanosine(46) in tRNA + S-adenosyl-L-methionine = N(7)-methylguanosine(46) in tRNA + S-adenosyl-L-homocysteine. The protein operates within tRNA modification; N(7)-methylguanine-tRNA biosynthesis. Functionally, catalyzes the formation of N(7)-methylguanine at position 46 (m7G46) in tRNA. This Aspergillus clavatus (strain ATCC 1007 / CBS 513.65 / DSM 816 / NCTC 3887 / NRRL 1 / QM 1276 / 107) protein is tRNA (guanine-N(7)-)-methyltransferase (trm8).